Reading from the N-terminus, the 233-residue chain is Eosinophil granule major basic protein 1 (233 aa).

A signal peptide spans 1-15 (MKLLLLLALLLGAVS). Residues 16–114 (TRHLKVDTSS…VKFFSRPGYK (99 aa)) constitute a propeptide, acidic. The disordered stretch occupies residues 24–96 (SSLQSLRGEE…SELDVSPEDI (73 aa)). A compositionally biased stretch (low complexity) spans 42–57 (AEGATREATAGALMPL). Residues 58 to 93 (PEEEEMEGASGSEDDPEEEEEEEEEVEFSSELDVSP) are compositionally biased toward acidic residues. A C-type lectin domain is found at 132-233 (WVCQRCYRGN…GKRRPFVCTY (102 aa)). 2 cysteine pairs are disulfide-bonded: Cys-134–Cys-231 and Cys-208–Cys-223.

Nitrated.

The protein resides in the cytoplasmic granule. MBP may play some important roles in the allergic reactions and inflammations, since MBP is capable of releasing histamine from mast cells and damaging the epithelial cells of bronchial tubes. Antiparasitic and antibiotic. This Cavia porcellus (Guinea pig) protein is Eosinophil granule major basic protein 1 (MBP1).